A 252-amino-acid polypeptide reads, in one-letter code: Hydroxyacylglutathione hydrolase (252 aa).

Zn(2+) contacts are provided by H54, H56, D58, H59, H111, D130, and H170.

It belongs to the metallo-beta-lactamase superfamily. Glyoxalase II family. As to quaternary structure, monomer. It depends on Zn(2+) as a cofactor.

It carries out the reaction an S-(2-hydroxyacyl)glutathione + H2O = a 2-hydroxy carboxylate + glutathione + H(+). It functions in the pathway secondary metabolite metabolism; methylglyoxal degradation; (R)-lactate from methylglyoxal: step 2/2. Thiolesterase that catalyzes the hydrolysis of S-D-lactoyl-glutathione to form glutathione and D-lactic acid. The polypeptide is Hydroxyacylglutathione hydrolase (Francisella tularensis subsp. tularensis (strain FSC 198)).